The following is a 546-amino-acid chain: Probable protein kinase UbiB (546 aa).

The 379-residue stretch at 124–502 (DFEIKPLASA…HVRQGQSRYF (379 aa)) folds into the Protein kinase domain. ATP is bound by residues 130 to 138 (LASASIAQV) and lysine 153. Catalysis depends on aspartate 288, which acts as the Proton acceptor. The next 2 helical transmembrane spans lie at 501 to 521 (YFLG…VSRP) and 522 to 542 (EWGL…FVGW).

Belongs to the ABC1 family. UbiB subfamily.

Its subcellular location is the cell inner membrane. The protein operates within cofactor biosynthesis; ubiquinone biosynthesis [regulation]. Functionally, is probably a protein kinase regulator of UbiI activity which is involved in aerobic coenzyme Q (ubiquinone) biosynthesis. In Escherichia coli O45:K1 (strain S88 / ExPEC), this protein is Probable protein kinase UbiB.